A 240-amino-acid chain; its full sequence is Adapter protein MecA (240 aa).

The disordered stretch occupies residues 118 to 138 (EQRAQQQKHSHKSEQKQTKQR).

This sequence belongs to the MecA family. In terms of assembly, homodimer.

Functionally, enables the recognition and targeting of unfolded and aggregated proteins to the ClpC protease or to other proteins involved in proteolysis. In Staphylococcus haemolyticus (strain JCSC1435), this protein is Adapter protein MecA.